Reading from the N-terminus, the 369-residue chain is MKYKRIVFKVGTSSITHSDGSLSRGKIQTITRQLAALHHAGHELVLVSSGAVAAGFGALGFKKRPVKIADKQASAAVGQGLLMEEYTANLSSDGIVSAQILLSRADFADKRRYQNAGGALSVLLQRRAVPIINENDTVSVEELKIGDNDTLSAQVAAMIQADLLVLLTDIDGLYTGNPNSNPDAVRLDKIEHINHEIIEMAGGSGSANGTGGMLTKIKAATIATESGVPVYICSSLKPDALAEAADNQADGSFFVPRAKGLRTQKQWLAFYSESRGGVYVDEGAEHALSEQGKSLLMSGIAGIEGHFSRMDTVTVYSKATKQPLGKGRVLFGSAAAEDLLKLRKAKGVFIHRDDWISITPEIRLLLTEF.

ATP is bound at residue K9. Substrate-binding residues include S49, D136, and N148. Residues 168–169 (TD) and 210–216 (TGGMLTK) contribute to the ATP site. A PUA domain is found at 275-355 (RGGVYVDEGA…KGVFIHRDDW (81 aa)).

This sequence belongs to the glutamate 5-kinase family.

It is found in the cytoplasm. The enzyme catalyses L-glutamate + ATP = L-glutamyl 5-phosphate + ADP. The protein operates within amino-acid biosynthesis; L-proline biosynthesis; L-glutamate 5-semialdehyde from L-glutamate: step 1/2. Its function is as follows. Catalyzes the transfer of a phosphate group to glutamate to form L-glutamate 5-phosphate. The chain is Glutamate 5-kinase from Neisseria meningitidis serogroup A / serotype 4A (strain DSM 15465 / Z2491).